A 172-amino-acid polypeptide reads, in one-letter code: Stellate protein CG33243 (172 aa).

The protein belongs to the casein kinase 2 subunit beta family. As to quaternary structure, interacts in vitro with the casein kinase 2 alpha subunit (CkII-alpha). The relevance of such interaction is however unclear in vivo. In terms of tissue distribution, probably not expressed in wild-type flies. In males lacking the Y chromosome, it is testis-specific and constitutes the main component of star-shaped crystals.

Functionally, unknown. In males lacking the Y chromosome, its strong overexpression leads to the appearance of proteinaceous star-shaped crystals in the primary spermatocytes causing meiotic drive, possibly by interfering with normal casein kinase 2 activity. The protein is Stellate protein CG33243 (Ste:CG33243) of Drosophila melanogaster (Fruit fly).